We begin with the raw amino-acid sequence, 141 residues long: Large ribosomal subunit protein uL11 (141 aa).

Belongs to the universal ribosomal protein uL11 family. As to quaternary structure, part of the ribosomal stalk of the 50S ribosomal subunit. Interacts with L10 and the large rRNA to form the base of the stalk. L10 forms an elongated spine to which L12 dimers bind in a sequential fashion forming a multimeric L10(L12)X complex. One or more lysine residues are methylated.

In terms of biological role, forms part of the ribosomal stalk which helps the ribosome interact with GTP-bound translation factors. The chain is Large ribosomal subunit protein uL11 from Limosilactobacillus reuteri (strain DSM 20016) (Lactobacillus reuteri).